The chain runs to 353 residues: Nicotinate-nucleotide--dimethylbenzimidazole phosphoribosyltransferase (353 aa).

The Proton acceptor role is filled by Glu318.

Belongs to the CobT family.

The enzyme catalyses 5,6-dimethylbenzimidazole + nicotinate beta-D-ribonucleotide = alpha-ribazole 5'-phosphate + nicotinate + H(+). It functions in the pathway nucleoside biosynthesis; alpha-ribazole biosynthesis; alpha-ribazole from 5,6-dimethylbenzimidazole: step 1/2. Functionally, catalyzes the synthesis of alpha-ribazole-5'-phosphate from nicotinate mononucleotide (NAMN) and 5,6-dimethylbenzimidazole (DMB). The protein is Nicotinate-nucleotide--dimethylbenzimidazole phosphoribosyltransferase of Roseiflexus sp. (strain RS-1).